A 603-amino-acid polypeptide reads, in one-letter code: Vacuolar protein sorting-associated protein 33A (603 aa).

Belongs to the STXBP/unc-18/SEC1 family. As to quaternary structure, probable component of the homotypic fusion and vacuole protein sorting (HOPS) complex consisting of the core class C Vps proteins vps-11, vps-16, vps-18, and which further associates with vps-33.1, vps-39 and vps-41. Interacts with spe-39. Ubiquitously expressed at high levels in somatic tissues including the pharynx, muscles, hypodermis, neurons, coelomocytes and spermatheca. Expressed in the intestine.

Its subcellular location is the lysosome. It is found in the early endosome. The protein localises to the late endosome. The protein resides in the apical cell membrane. In terms of biological role, plays a role in vesicle-mediated protein trafficking to lysosomal compartments including the endocytic membrane transport pathways. Believed to act as a component of the putative HOPS endosomal tethering complex which is proposed to be involved in the rab-5-to-rab-7 endosome conversion probably implicating sand-1, and via binding SNAREs and SNARE complexes to mediate tethering and docking events during SNARE-mediated membrane fusion. The HOPS complex is proposed to be recruited to rab-7 on the late endosomal membrane and to regulate late endocytic, phagocytic and autophagic traffic towards lysosomes. Within the HOPS complex, contributes to the normal development of gut granules in embryonic and adult intestinal cells. Required for endosome/lysosome fusion. Required for early embryonic development. The sequence is that of Vacuolar protein sorting-associated protein 33A from Caenorhabditis elegans.